The sequence spans 103 residues: Small ribosomal subunit protein uS10 (103 aa).

Belongs to the universal ribosomal protein uS10 family. In terms of assembly, part of the 30S ribosomal subunit.

Functionally, involved in the binding of tRNA to the ribosomes. The chain is Small ribosomal subunit protein uS10 from Burkholderia mallei (strain NCTC 10247).